Reading from the N-terminus, the 96-residue chain is ATP synthase subunit e, mitochondrial (96 aa).

S2 carries the N-acetylserine modification.

This sequence belongs to the ATPase e subunit family. In terms of assembly, F-type ATPases have 2 components, CF(1) - the catalytic core - and CF(0) - the membrane proton channel. In yeast, the dimeric form of ATP synthase consists of 17 polypeptides: alpha, beta, gamma, delta, epsilon, 4 (B), 5 (OSCP), 6 (A), 8, 9 (C), d, E (Tim11), f, g, h, i/j and k.

The protein resides in the mitochondrion. It is found in the mitochondrion inner membrane. In terms of biological role, mitochondrial membrane ATP synthase (F(1)F(0) ATP synthase or Complex V) produces ATP from ADP in the presence of a proton gradient across the membrane which is generated by electron transport complexes of the respiratory chain. F-type ATPases consist of two structural domains, F(1) - containing the extramembraneous catalytic core, and F(0) - containing the membrane proton channel, linked together by a central stalk and a peripheral stalk. During catalysis, ATP synthesis in the catalytic domain of F(1) is coupled via a rotary mechanism of the central stalk subunits to proton translocation. Part of the complex F(0) domain. Minor subunit located with subunit a in the membrane. This is ATP synthase subunit e, mitochondrial (TIM11) from Saccharomyces cerevisiae (strain ATCC 204508 / S288c) (Baker's yeast).